The sequence spans 410 residues: Interstrand DNA cross-link repair glycosylase (410 aa).

Residues 45-47 carry the QXD; important for activity motif; it reads QID.

This sequence belongs to the DNA glycosylase AlkZ-like family.

Its function is as follows. DNA glycosylase involved in the repair of interstrand DNA cross-links (ICLs), which are highly toxic DNA lesions that covalently tether the opposing strands of DNA, thereby inhibiting essential cellular processes such as DNA replication and transcription. Acts by unhooking both sides of the ICLs, forming abasic (AP) sites on both strands. Unhooks ICLs derived from various cross-linking agents, including azinomycin B (AZB) and mechlorethamine, also known as nitrogen mustard (NM), protecting cells from the toxicity of these cross-linking agents. In vitro, also acts on monoadducts and can catalyze the excision of N7-methylguanine (7mGua) from an oligonucleotide containing N7-methyldeoxyguanosine (d7mG). Shows no unhooking activity toward FaPy-ICLs. The chain is Interstrand DNA cross-link repair glycosylase (ycaQ) from Escherichia coli (strain K12).